The chain runs to 292 residues: D-alanyl-D-alanine endopeptidase (292 aa).

Positions 1–18 (MFKKALFILSLCPSFALA) are cleaved as a signal peptide. S45 (acyl-ester intermediate) is an active-site residue. K48 acts as the Proton acceptor in catalysis. S102 is an active-site residue. K207 is a substrate binding site.

Belongs to the peptidase S11 family.

The protein resides in the periplasm. Functionally, cell wall formation. May play a specialized role in remodeling the cell wall. Specifically hydrolyzes the DD-diaminopimelate-alanine bonds in high-molecular-mass murein sacculi. This is D-alanyl-D-alanine endopeptidase (pbpG) from Haemophilus influenzae (strain ATCC 51907 / DSM 11121 / KW20 / Rd).